The chain runs to 491 residues: Cysteine protease ATG4 (491 aa).

Residues 53–137 (KTKGEDSKLS…VDSSFDSSMA (85 aa)) form a disordered region. Residues 61-72 (LSTATSSDQQRP) show a composition bias toward polar residues. Residues 126–135 (DSVDSSFDSS) show a composition bias toward low complexity. Cysteine 206 acts as the Nucleophile in catalysis. Catalysis depends on residues aspartate 385 and histidine 387. The disordered stretch occupies residues 457-491 (VSEHDPSKGSASGRPSAIDEVETLSDDDGDTVLDG). The span at 475-491 (DEVETLSDDDGDTVLDG) shows a compositional bias: acidic residues.

Belongs to the peptidase C54 family. As to quaternary structure, interacts with ATG8.

The protein resides in the cytoplasm. Its subcellular location is the nucleus. The protein localises to the preautophagosomal structure. It catalyses the reaction [protein]-C-terminal L-amino acid-glycyl-phosphatidylethanolamide + H2O = [protein]-C-terminal L-amino acid-glycine + a 1,2-diacyl-sn-glycero-3-phosphoethanolamine. Functionally, cysteine protease that plays a key role in cytoplasm to vacuole transport (Cvt) and autophagy by mediating both proteolytic activation and delipidation of ATG8. Required for selective autophagic degradation of the nucleus (nucleophagy) as well as for mitophagy which contributes to regulate mitochondrial quantity and quality by eliminating the mitochondria to a basal level to fulfill cellular energy requirements and preventing excess ROS production. The protease activity is required for proteolytic activation of ATG8: cleaves the C-terminal amino acid of ATG8 to reveal a C-terminal glycine. ATG8 ubiquitin-like activity requires the exposure of the glycine at the C-terminus for its conjugation to phosphatidylethanolamine (PE) and its insertion to membranes, which is necessary for autophagy. The ATG8-PE conjugate mediates tethering between adjacent membranes and stimulates membrane hemifusion, leading to expansion of the autophagosomal membrane during autophagy. In addition to the protease activity, also catalyzes deconjugation of PE-conjugated forms of ATG8 during macroautophagy: ATG8 delipidation is required to release the protein from membranes, which facilitates multiple events during macroautophagy, and especially for efficient autophagosome biogenesis, the assembly of ATG9-containing tubulovesicular clusters into phagophores/autophagosomes, and for the disassembly of PAS-associated ATG components. ATG8 delipidation by ATG4 also recycles ATG8-PE generated on inappropriate membranes to maintain a reservoir of unlipidated ATG8 that is required for autophagosome formation at the PAS. The protein is Cysteine protease ATG4 (ATG4) of Pyricularia oryzae (strain 70-15 / ATCC MYA-4617 / FGSC 8958) (Rice blast fungus).